We begin with the raw amino-acid sequence, 837 residues long: GRIP1-associated protein 1 (837 aa).

At Ala-2 the chain carries N-acetylalanine. Residues 4–158 (ALSEEEFQRM…ALQERYGKEA (155 aa)) are a coiled coil. Disordered regions lie at residues 161 to 180 (PSAV…PISL), 555 to 577 (KGKE…ERDG), 647 to 666 (SEMN…VSSF), and 677 to 702 (SSAI…LSDE). Residues 204-637 (EQLQGLESSK…LQEILTNSKS (434 aa)) are a coiled coil. Positions 648-666 (EMNSPSRTQTGDSSSVSSF) are enriched in polar residues. Phosphoserine is present on residues Ser-651, Ser-662, Ser-664, Ser-665, Ser-684, Ser-686, Ser-687, and Ser-688. Residues 678 to 690 (SAIPARSLSSSPQ) show a composition bias toward low complexity. Coiled-coil stretches lie at residues 697-731 (AELS…LEVS) and 781-810 (DENL…KDME). Phosphoserine is present on Ser-826.

As to quaternary structure, interacts with GRIP1, GRIP2 and AMPA receptors. Interacts (via C-terminus) with MAPK8/JNK1 and with MAP3K1/MEKK1; the interaction promotes MAP3K1-mediated phosphorylation of MAPK8. Interacts (via N-terminus) with RAB4A (in GTP-bound form). Interacts (via C-terminus) with STX12. Post-translationally, proteolytically cleaved by caspase-3. A minor C-terminal proteolytic fragment of 30 kDa is produced. Proteolytic cleavage is required for JNK signaling activation. As to expression, expressed in the central nervous system; especially in neurons.

Its subcellular location is the early endosome membrane. The protein resides in the recycling endosome membrane. It localises to the cell projection. The protein localises to the axon. It is found in the dendrite. Its subcellular location is the synapse. In terms of biological role, regulates the endosomal recycling back to the neuronal plasma membrane, possibly by connecting early and late recycling endosomal domains and promoting segregation of recycling endosomes from early endosomal membranes. Involved in the localization of recycling endosomes to dendritic spines, thereby playing a role in the maintenance of dendritic spine morphology. Required for the activity-induced AMPA receptor recycling to dendrite membranes and for long-term potentiation and synaptic plasticity. Functions as a scaffold protein in neurons to facilitate MAP3K1/MEKK1-mediated activation of the JNK1 kinase by phosphorylation, possibly by bringing MAP3K1/MEKK1 and JNK1 in close proximity. The protein is GRIP1-associated protein 1 (Gripap1) of Rattus norvegicus (Rat).